The chain runs to 317 residues: L-lactate dehydrogenase (317 aa).

Residues valine 16, aspartate 37, and tyrosine 69 each contribute to the NAD(+) site. Substrate is bound by residues glutamine 86, arginine 92, and 124–127 (NPVD). NAD(+) contacts are provided by residues 122–124 (ASN) and serine 147. 152–155 (DSAR) serves as a coordination point for substrate. Catalysis depends on histidine 179, which acts as the Proton acceptor. Position 223 is a phosphotyrosine (tyrosine 223). Residue threonine 232 participates in substrate binding.

Belongs to the LDH/MDH superfamily. LDH family. As to quaternary structure, homotetramer.

The protein resides in the cytoplasm. The catalysed reaction is (S)-lactate + NAD(+) = pyruvate + NADH + H(+). The protein operates within fermentation; pyruvate fermentation to lactate; (S)-lactate from pyruvate: step 1/1. Functionally, catalyzes the conversion of lactate to pyruvate. This Mycoplasma capricolum subsp. capricolum (strain California kid / ATCC 27343 / NCTC 10154) protein is L-lactate dehydrogenase.